We begin with the raw amino-acid sequence, 182 residues long: Cbp/p300-interacting transactivator 4 (182 aa).

A disordered region spans residues 22–129 (GPHAPRTLQP…PPPPPPALGC (108 aa)). Residues 64-89 (SPVSFQPFPVSQSPGAGSTHLQSAAT) are compositionally biased toward polar residues. The span at 100 to 117 (AAAGGPSPLQPAPGAAAS) shows a compositional bias: low complexity.

Belongs to the CITED family. As to quaternary structure, interacts via its C-terminal region with the CH1 domain of CREBBP and EP300. Interacts with all TFAP2/AP-2 isoforms. As to expression, strongly expressed in heart, spleen and testis, and weakly in liver and kidney.

The protein resides in the nucleus. Its subcellular location is the cytoplasm. Functionally, acts as a transcriptional coactivator for TFAP2/AP-2. Enhances estrogen-dependent transactivation mediated by estrogen receptors. May function as an inhibitor of transactivation by HIF1A by disrupting HIF1A interaction with CREBBP. May be involved in regulation of gene expression during development and differentiation of blood cells, endothelial cells and mammary epithelial cells. This is Cbp/p300-interacting transactivator 4 from Mus musculus (Mouse).